We begin with the raw amino-acid sequence, 830 residues long: Probable glucan 1,3-beta-glucosidase D (830 aa).

Positions 1-34 are enriched in basic and acidic residues; the sequence is MPSQSRSRDRYRGRDTEYTRRRYPDEHDYSHDDH. Residues 1-279 form a disordered region; sequence MPSQSRSRDR…PPMDARWPKG (279 aa). Residues 1–301 lie on the Cytoplasmic side of the membrane; sequence MPSQSRSRDR…GRPFWKQKKW (301 aa). A compositionally biased stretch (acidic residues) spans 35–51; sequence DYDYDDDDDDNDDLEQD. Basic and acidic residues-rich tracts occupy residues 52–98 and 110–175; these read VTER…ERRR and QHRE…KHQS. Over residues 181–194 the composition is skewed to low complexity; sequence SASHLLSADALARL. Basic and acidic residues-rich tracts occupy residues 198-215, 228-243, and 253-264; these read YEKE…AAKA, EQER…DRSR, and EEGRGPEMEFRR. Residues 302–322 traverse the membrane as a helical; Signal-anchor for type II membrane protein segment; it reads LIGIGVVILILVIVIPVAVVV. Residues 323 to 830 lie on the Extracellular side of the membrane; that stretch reads SKKHNDKPNA…PDFGSLPEYY (508 aa). Residues 327–351 are disordered; sequence NDKPNATTTQPDGTTPSNSNLDGLS. Over residues 330–348 the composition is skewed to polar residues; sequence PNATTTQPDGTTPSNSNLD. N-linked (GlcNAc...) asparagine glycans are attached at residues Asn-331, Asn-376, Asn-381, Asn-393, Asn-546, and Asn-558. Residue Glu-597 is the Proton donor of the active site. Asn-610, Asn-636, Asn-669, and Asn-689 each carry an N-linked (GlcNAc...) asparagine glycan. Glu-701 functions as the Nucleophile in the catalytic mechanism.

This sequence belongs to the glycosyl hydrolase 5 (cellulase A) family.

It is found in the cell membrane. It carries out the reaction Successive hydrolysis of beta-D-glucose units from the non-reducing ends of (1-&gt;3)-beta-D-glucans, releasing alpha-glucose.. Functionally, glucosidase involved in the degradation of cellulosic biomass. Active on lichenan. In Aspergillus clavatus (strain ATCC 1007 / CBS 513.65 / DSM 816 / NCTC 3887 / NRRL 1 / QM 1276 / 107), this protein is Probable glucan 1,3-beta-glucosidase D (exgD).